The sequence spans 276 residues: Large ribosomal subunit protein uL2 (276 aa).

The interval 219-268 (TVRGSVMNPNDHPHGGGEGRQPVGRKSPMTPWGKPALGLKTRNKKAKSSK) is disordered.

It belongs to the universal ribosomal protein uL2 family. Part of the 50S ribosomal subunit. Forms a bridge to the 30S subunit in the 70S ribosome.

One of the primary rRNA binding proteins. Required for association of the 30S and 50S subunits to form the 70S ribosome, for tRNA binding and peptide bond formation. It has been suggested to have peptidyltransferase activity; this is somewhat controversial. Makes several contacts with the 16S rRNA in the 70S ribosome. The chain is Large ribosomal subunit protein uL2 from Lactococcus lactis subsp. lactis (strain IL1403) (Streptococcus lactis).